Reading from the N-terminus, the 289-residue chain is Nodulation protein NolT (289 aa).

The N-terminal stretch at 1 to 33 (MFGSAHGDTTSSDTSGRRPLRLVVLPLLLALSS) is a signal peptide. Residue Cys34 is the site of N-palmitoyl cysteine attachment. Cys34 carries the S-diacylglycerol cysteine lipid modification. A helical transmembrane segment spans residues 233 to 253 (VAVGVGAAVFAVTCYLLFIVL).

Belongs to the YscJ lipoprotein family.

It is found in the cell outer membrane. Its function is as follows. Regulates cultivar-specific nodulation of soybean. The polypeptide is Nodulation protein NolT (nolT) (Rhizobium fredii (Sinorhizobium fredii)).